A 175-amino-acid chain; its full sequence is Ribosome maturation factor RimM (175 aa).

The region spanning 96 to 175 (EGDFYWHDLI…TIEVDWDAGF (80 aa)) is the PRC barrel domain.

The protein belongs to the RimM family. In terms of assembly, binds ribosomal protein uS19.

Its subcellular location is the cytoplasm. In terms of biological role, an accessory protein needed during the final step in the assembly of 30S ribosomal subunit, possibly for assembly of the head region. Essential for efficient processing of 16S rRNA. May be needed both before and after RbfA during the maturation of 16S rRNA. It has affinity for free ribosomal 30S subunits but not for 70S ribosomes. This chain is Ribosome maturation factor RimM, found in Histophilus somni (strain 129Pt) (Haemophilus somnus).